Here is a 305-residue protein sequence, read N- to C-terminus: UDP-N-acetylenolpyruvoylglucosamine reductase (305 aa).

An FAD-binding PCMH-type domain is found at 35-214; it reads VGGPAQALFT…RARMNEVQAH (180 aa). Arginine 179 is a catalytic residue. The Proton donor role is filled by serine 228. Residue glutamate 298 is part of the active site.

This sequence belongs to the MurB family. FAD serves as cofactor.

It is found in the cytoplasm. It catalyses the reaction UDP-N-acetyl-alpha-D-muramate + NADP(+) = UDP-N-acetyl-3-O-(1-carboxyvinyl)-alpha-D-glucosamine + NADPH + H(+). It functions in the pathway cell wall biogenesis; peptidoglycan biosynthesis. Functionally, cell wall formation. The protein is UDP-N-acetylenolpyruvoylglucosamine reductase of Nitrobacter winogradskyi (strain ATCC 25391 / DSM 10237 / CIP 104748 / NCIMB 11846 / Nb-255).